A 215-amino-acid polypeptide reads, in one-letter code: Deoxyribose-phosphate aldolase (215 aa).

D89 functions as the Proton donor/acceptor in the catalytic mechanism. K150 acts as the Schiff-base intermediate with acetaldehyde in catalysis. Catalysis depends on K174, which acts as the Proton donor/acceptor.

This sequence belongs to the DeoC/FbaB aldolase family. DeoC type 1 subfamily.

The protein resides in the cytoplasm. The enzyme catalyses 2-deoxy-D-ribose 5-phosphate = D-glyceraldehyde 3-phosphate + acetaldehyde. It participates in carbohydrate degradation; 2-deoxy-D-ribose 1-phosphate degradation; D-glyceraldehyde 3-phosphate and acetaldehyde from 2-deoxy-alpha-D-ribose 1-phosphate: step 2/2. Its function is as follows. Catalyzes a reversible aldol reaction between acetaldehyde and D-glyceraldehyde 3-phosphate to generate 2-deoxy-D-ribose 5-phosphate. This chain is Deoxyribose-phosphate aldolase, found in Natronomonas pharaonis (strain ATCC 35678 / DSM 2160 / CIP 103997 / JCM 8858 / NBRC 14720 / NCIMB 2260 / Gabara) (Halobacterium pharaonis).